The following is a 450-amino-acid chain: Folate synthesis bifunctional protein (450 aa).

The interval 1–166 is HPPK; that stretch reads MTTWNFVCLG…TFAELAAIYP (166 aa). In terms of domain architecture, Pterin-binding spans 180-441; it reads TQIMGIVNVT…QVEGNRRVLA (262 aa). Residues 182–450 form a DHPS region; it reads IMGIVNVTDD…AAAAWSGMPV (269 aa). N187 contacts Mg(2+). Residues T227, D267, N287, D358, K395, and 429–431 contribute to the (7,8-dihydropterin-6-yl)methyl diphosphate site; that span reads RVH.

This sequence in the C-terminal section; belongs to the DHPS family. In the N-terminal section; belongs to the HPPK family. Requires Mg(2+) as cofactor.

The enzyme catalyses 6-hydroxymethyl-7,8-dihydropterin + ATP = (7,8-dihydropterin-6-yl)methyl diphosphate + AMP + H(+). The catalysed reaction is (7,8-dihydropterin-6-yl)methyl diphosphate + 4-aminobenzoate = 7,8-dihydropteroate + diphosphate. Its pathway is cofactor biosynthesis; tetrahydrofolate biosynthesis; 2-amino-4-hydroxy-6-hydroxymethyl-7,8-dihydropteridine diphosphate from 7,8-dihydroneopterin triphosphate: step 4/4. The protein operates within cofactor biosynthesis; tetrahydrofolate biosynthesis; 7,8-dihydrofolate from 2-amino-4-hydroxy-6-hydroxymethyl-7,8-dihydropteridine diphosphate and 4-aminobenzoate: step 1/2. This is Folate synthesis bifunctional protein (folKP) from Chlamydia muridarum (strain MoPn / Nigg).